The following is a 459-amino-acid chain: Chromosomal replication initiator protein DnaA (459 aa).

A domain I, interacts with DnaA modulators region spans residues 1–90; sequence MAVSLWQQCI…RPASKPAAPA (90 aa). The segment at 75–124 is disordered; it reads RFDIGSRPASKPAAPAASTKSPVAPAAKSPSKPSFNSNEPAATANHRSNM. Residues 80–108 are compositionally biased toward low complexity; it reads SRPASKPAAPAASTKSPVAPAAKSPSKPS. Residues 91–122 form a domain II region; sequence ASTKSPVAPAAKSPSKPSFNSNEPAATANHRS. Polar residues predominate over residues 109-124; sequence FNSNEPAATANHRSNM. The domain III, AAA+ region stretch occupies residues 123-339; the sequence is NMNPTYQFDN…GALNRVIANA (217 aa). 4 residues coordinate ATP: G167, G169, K170, and T171. The tract at residues 340-459 is domain IV, binds dsDNA; sequence NFTGRPITID…YANLIRTLSS (120 aa).

It belongs to the DnaA family. Oligomerizes as a right-handed, spiral filament on DNA at oriC.

It localises to the cytoplasm. Plays an essential role in the initiation and regulation of chromosomal replication. ATP-DnaA binds to the origin of replication (oriC) to initiate formation of the DNA replication initiation complex once per cell cycle. Binds the DnaA box (a 9 base pair repeat at the origin) and separates the double-stranded (ds)DNA. Forms a right-handed helical filament on oriC DNA; dsDNA binds to the exterior of the filament while single-stranded (ss)DNA is stabiized in the filament's interior. The ATP-DnaA-oriC complex binds and stabilizes one strand of the AT-rich DNA unwinding element (DUE), permitting loading of DNA polymerase. After initiation quickly degrades to an ADP-DnaA complex that is not apt for DNA replication. Binds acidic phospholipids. The polypeptide is Chromosomal replication initiator protein DnaA (Shewanella loihica (strain ATCC BAA-1088 / PV-4)).